The sequence spans 246 residues: Enolase-phosphatase E1 (246 aa).

Mg(2+) is bound by residues aspartate 15 and glutamate 17. Residues 134 to 135 (SS) and lysine 174 contribute to the substrate site. Aspartate 201 contacts Mg(2+).

This sequence belongs to the HAD-like hydrolase superfamily. MasA/MtnC family. As to quaternary structure, monomer. It depends on Mg(2+) as a cofactor.

The protein resides in the cytoplasm. Its subcellular location is the nucleus. The enzyme catalyses 5-methylsulfanyl-2,3-dioxopentyl phosphate + H2O = 1,2-dihydroxy-5-(methylsulfanyl)pent-1-en-3-one + phosphate. The protein operates within amino-acid biosynthesis; L-methionine biosynthesis via salvage pathway; L-methionine from S-methyl-5-thio-alpha-D-ribose 1-phosphate: step 3/6. It functions in the pathway amino-acid biosynthesis; L-methionine biosynthesis via salvage pathway; L-methionine from S-methyl-5-thio-alpha-D-ribose 1-phosphate: step 4/6. In terms of biological role, bifunctional enzyme that catalyzes the enolization of 2,3-diketo-5-methylthiopentyl-1-phosphate (DK-MTP-1-P) into the intermediate 2-hydroxy-3-keto-5-methylthiopentenyl-1-phosphate (HK-MTPenyl-1-P), which is then dephosphorylated to form the acireductone 1,2-dihydroxy-3-keto-5-methylthiopentene (DHK-MTPene). This is Enolase-phosphatase E1 from Debaryomyces hansenii (strain ATCC 36239 / CBS 767 / BCRC 21394 / JCM 1990 / NBRC 0083 / IGC 2968) (Yeast).